The sequence spans 230 residues: LexA repressor (230 aa).

The tract at residues 1–21 is disordered; the sequence is MSDDSSETRTGGRRGADAGLT. The segment at residues 44–64 is a DNA-binding region (H-T-H motif); the sequence is IREIGDAVGLTSTSSVAHQLR. Catalysis depends on for autocatalytic cleavage activity residues serine 154 and lysine 191.

It belongs to the peptidase S24 family. Homodimer.

The catalysed reaction is Hydrolysis of Ala-|-Gly bond in repressor LexA.. Its function is as follows. Represses a number of genes involved in the response to DNA damage (SOS response), including recA and lexA. In the presence of single-stranded DNA, RecA interacts with LexA causing an autocatalytic cleavage which disrupts the DNA-binding part of LexA, leading to derepression of the SOS regulon and eventually DNA repair. This is LexA repressor from Mycobacterium sp. (strain JLS).